The sequence spans 323 residues: Mycothiol acetyltransferase (323 aa).

Glu-44 serves as a coordination point for 1D-myo-inositol 2-(L-cysteinylamino)-2-deoxy-alpha-D-glucopyranoside. Residue 98–100 (LAV) participates in acetyl-CoA binding. The region spanning 173-323 (VSLRAFIPGQ…DVMYGPKNGG (151 aa)) is the N-acetyltransferase domain. 3 residues coordinate 1D-myo-inositol 2-(L-cysteinylamino)-2-deoxy-alpha-D-glucopyranoside: Glu-200, Lys-240, and Glu-253. Acetyl-CoA-binding positions include 257-259 (VGV) and 264-270 (QGMGLGK). Tyr-291 provides a ligand contact to 1D-myo-inositol 2-(L-cysteinylamino)-2-deoxy-alpha-D-glucopyranoside.

The protein belongs to the acetyltransferase family. MshD subfamily. Monomer.

It carries out the reaction 1D-myo-inositol 2-(L-cysteinylamino)-2-deoxy-alpha-D-glucopyranoside + acetyl-CoA = mycothiol + CoA + H(+). Catalyzes the transfer of acetyl from acetyl-CoA to desacetylmycothiol (Cys-GlcN-Ins) to form mycothiol. This Arthrobacter sp. (strain FB24) protein is Mycothiol acetyltransferase.